A 1104-amino-acid polypeptide reads, in one-letter code: Protein KIBRA (1104 aa).

WW domains follow at residues 6–39 and 53–86; these read LPLP…DPRD and DELP…DPRV. Residues 107–193 are a coiled coil; that stretch reads LSAQKEIYQV…ELQFKERGFQ (87 aa). Serine 141 is subject to Phosphoserine. 2 disordered regions span residues 429-449 and 509-547; these read SMQS…RGSL and TQKA…SPPC. Residues 527–542 show a composition bias toward low complexity; it reads TPRSMTSLSPRSSLSS. Serine 535 is modified (phosphoserine). Serine 542 is modified (phosphoserine; by CDK1). The region spanning 659–782 is the C2 domain; that stretch reads GATRVQIALK…RSGERSTRWY (124 aa). The interval 822 to 949 is disordered; the sequence is LEKRQEGRSS…DSSTLSKKPP (128 aa). Positions 836–1104 are interaction with histone H3; it reads EGSWTYEEEA…NIPALSADDV (269 aa). The segment covering 841–862 has biased composition (acidic residues); sequence YEEEASENEAVAEEEEEGEEDV. Residues serine 887, serine 891, and serine 919 each carry the phosphoserine modification. A compositionally biased stretch (polar residues) spans 916–930; sequence IIRSKTFSPGPQSQY. Threonine 921 bears the Phosphothreonine mark. Position 923 is a phosphoserine; by CDK1 (serine 923). Serine 939 carries the phosphoserine modification. Interaction with PRKCZ regions lie at residues 945–988 and 948–967; these read SKKP…LDLQ and PPFV…RPSS. Phosphoserine; by PKC/PRKCZ occurs at positions 967 and 970. The stretch at 994–1024 forms a coiled coil; that stretch reads HSQLTQEISVLKELKEHLEQAKNHGEKELPQ. An ADDV motif motif is present at residues 1102–1104; that stretch reads DDV.

Belongs to the WWC family. KIBRA subfamily. In terms of assembly, homodimer. Forms heterodimers with WWC2 and WWC3. Interacts with DDN. Interacts with DYNLL1 and histone H3. The interaction with DYNLL1 is mandatory for the recruitment and transactivation functions of ESR1 or DYNLL1 to the target chromatin and the interaction with histone H3 ensures proper regulatory interaction of WWC1-DYNLL1-ESR1 complexes with target chromatin. Interacts (via WW domains) with DDR1 (via PPxY motif) in a collagen-regulated manner. Interacts with PRKCZ (via the protein kinase domain). Forms a tripartite complex with DDR1 and PRKCZ, but predominantly in the absence of collagen. Interacts (via the ADDV motif) with PATJ (via PDZ domain 8). Interacts (via WW domains) with SYNPO (via PPxY motifs). Interacts with NF2 and SNX4. Interacts with CCDC141; retains AMPAR in the cytosol after internalization. Interacts with DLC1 and PRKCZ. Interacts (via WW domains) with LATS1 and LATS2. In terms of processing, phosphorylation at Ser-542 and Ser-923 by CDK1 in response to spindle damage stress regulates mitotic exit, these two sites are dephosphorylated by CDC14B. In terms of tissue distribution, mammary epithelium.

It is found in the cytoplasm. Its subcellular location is the perinuclear region. The protein resides in the nucleus. It localises to the cell projection. The protein localises to the ruffle membrane. It is found in the cytosol. Functionally, regulator of the Hippo signaling pathway, also known as the Salvador-Warts-Hippo (SWH) pathway. Enhances phosphorylation of LATS1 and YAP1 and negatively regulates cell proliferation and organ growth due to a suppression of the transcriptional activity of YAP1, the major effector of the Hippo pathway. Along with NF2 can synergistically induce the phosphorylation of LATS1 and LATS2 and function in the regulation of Hippo signaling pathway. Acts as a transcriptional coactivator of ESR1 which plays an essential role in DYNLL1-mediated ESR1 transactivation. Modulates directional migration of podocytes. May be associated with memory performance. Regulates collagen-stimulated activation of the ERK/MAPK cascade. Plays an important role in regulating AMPA-selective glutamate receptors (AMPARs) trafficking. The sequence is that of Protein KIBRA (Wwc1) from Mus musculus (Mouse).